A 296-amino-acid polypeptide reads, in one-letter code: DNA primase small subunit PriS (296 aa).

Active-site residues include Asp-82, Asp-84, and Asp-191.

It belongs to the eukaryotic-type primase small subunit family. As to quaternary structure, heterodimer of a small subunit (PriS) and a large subunit (PriL). Mg(2+) is required as a cofactor. Mn(2+) serves as cofactor.

Functionally, catalytic subunit of DNA primase, an RNA polymerase that catalyzes the synthesis of short RNA molecules used as primers for DNA polymerase during DNA replication. The small subunit contains the primase catalytic core and has DNA synthesis activity on its own. Binding to the large subunit stabilizes and modulates the activity, increasing the rate of DNA synthesis while decreasing the length of the DNA fragments, and conferring RNA synthesis capability. The DNA polymerase activity may enable DNA primase to also catalyze primer extension after primer synthesis. May also play a role in DNA repair. In Methanopyrus kandleri (strain AV19 / DSM 6324 / JCM 9639 / NBRC 100938), this protein is DNA primase small subunit PriS.